A 206-amino-acid chain; its full sequence is MELNVTTLEGKAAGSVNLSDTIFGLEPRTDIIQRVVNWQLAKRQAGTHKTKGRAEIARTGKKMYKQKGTGGARHGSARVPQFRGGGRAFGPVVRSHAYDLPKKVRALGLRHALSAKAKDGSLVVLDNAELKDAKTKALIGHFSGLGLTSALIVDGAEVNNGFAQAARNIPHIDVLPIQGINVYDILRRQKLVLTKAAVDALEARFK.

It belongs to the universal ribosomal protein uL4 family. In terms of assembly, part of the 50S ribosomal subunit.

Functionally, one of the primary rRNA binding proteins, this protein initially binds near the 5'-end of the 23S rRNA. It is important during the early stages of 50S assembly. It makes multiple contacts with different domains of the 23S rRNA in the assembled 50S subunit and ribosome. Forms part of the polypeptide exit tunnel. In Afipia carboxidovorans (strain ATCC 49405 / DSM 1227 / KCTC 32145 / OM5) (Oligotropha carboxidovorans), this protein is Large ribosomal subunit protein uL4.